A 100-amino-acid polypeptide reads, in one-letter code: Small ribosomal subunit protein uS14c (100 aa).

It belongs to the universal ribosomal protein uS14 family. Part of the 30S ribosomal subunit.

It localises to the plastid. The protein localises to the chloroplast. Its function is as follows. Binds 16S rRNA, required for the assembly of 30S particles. The sequence is that of Small ribosomal subunit protein uS14c from Gossypium barbadense (Sea Island cotton).